Here is a 508-residue protein sequence, read N- to C-terminus: Photosystem II CP47 reaction center protein (508 aa).

Helical transmembrane passes span 21–36 (SVHI…WAGS), 101–115 (IMFS…IWHW), 140–156 (GIHL…FGAF), 203–218 (IAAG…FHLS), 237–252 (VLSS…AFVV), and 457–472 (SFAL…HGAR).

It belongs to the PsbB/PsbC family. PsbB subfamily. As to quaternary structure, PSII is composed of 1 copy each of membrane proteins PsbA, PsbB, PsbC, PsbD, PsbE, PsbF, PsbH, PsbI, PsbJ, PsbK, PsbL, PsbM, PsbT, PsbX, PsbY, PsbZ, Psb30/Ycf12, at least 3 peripheral proteins of the oxygen-evolving complex and a large number of cofactors. It forms dimeric complexes. It depends on Binds multiple chlorophylls. PSII binds additional chlorophylls, carotenoids and specific lipids. as a cofactor.

It is found in the plastid. The protein localises to the chloroplast thylakoid membrane. One of the components of the core complex of photosystem II (PSII). It binds chlorophyll and helps catalyze the primary light-induced photochemical processes of PSII. PSII is a light-driven water:plastoquinone oxidoreductase, using light energy to abstract electrons from H(2)O, generating O(2) and a proton gradient subsequently used for ATP formation. This is Photosystem II CP47 reaction center protein from Ceratophyllum demersum (Rigid hornwort).